A 913-amino-acid polypeptide reads, in one-letter code: Cadherin-4 (913 aa).

Positions 1-20 (MTTGSVLPLLLLGLSGALRA) are cleaved as a signal peptide. Positions 21 to 166 (HREDLTVREA…SSGGLRRQKR (146 aa)) are excised as a propeptide. N-linked (GlcNAc...) asparagine glycosylation occurs at Asn146. Cadherin domains lie at 167–274 (DWVI…RPEF), 275–389 (INQV…PPEF), 390–504 (TTST…APYF), 505–610 (PSNH…DNAP), and 611–721 (QLLP…TVGA). The Extracellular portion of the chain corresponds to 167–731 (DWVIPPINVP…VAAAGLGTGA (565 aa)). 6 N-linked (GlcNAc...) asparagine glycosylation sites follow: Asn280, Asn409, Asn554, Asn629, Asn658, and Asn699. The helical transmembrane segment at 732-753 (IVAILICIVILLIMVLLFVVWM) threads the bilayer. The Cytoplasmic segment spans residues 754-913 (KRREKERHTK…ADMYGGGEED (160 aa)).

Distributed widely in mouse tissues with high levels present in brain, skeletal muscle and thymus.

It is found in the cell membrane. In terms of biological role, cadherins are calcium-dependent cell adhesion proteins. They preferentially interact with themselves in a homophilic manner in connecting cells; cadherins may thus contribute to the sorting of heterogeneous cell types. May play an important role in retinal development. This chain is Cadherin-4 (Cdh4), found in Mus musculus (Mouse).